The chain runs to 366 residues: Chorismate synthase (366 aa).

NADP(+) is bound at residue Arg46. FMN contacts are provided by residues Arg122–Ser124, Asn243–Gly244, Gly284, Lys299–Ser303, and Arg325.

The protein belongs to the chorismate synthase family. In terms of assembly, homotetramer. Requires FMNH2 as cofactor.

It carries out the reaction 5-O-(1-carboxyvinyl)-3-phosphoshikimate = chorismate + phosphate. Its pathway is metabolic intermediate biosynthesis; chorismate biosynthesis; chorismate from D-erythrose 4-phosphate and phosphoenolpyruvate: step 7/7. Its function is as follows. Catalyzes the anti-1,4-elimination of the C-3 phosphate and the C-6 proR hydrogen from 5-enolpyruvylshikimate-3-phosphate (EPSP) to yield chorismate, which is the branch point compound that serves as the starting substrate for the three terminal pathways of aromatic amino acid biosynthesis. This reaction introduces a second double bond into the aromatic ring system. The polypeptide is Chorismate synthase (Campylobacter hominis (strain ATCC BAA-381 / DSM 21671 / CCUG 45161 / LMG 19568 / NCTC 13146 / CH001A)).